The primary structure comprises 1272 residues: AF4/FMR2 family member 2 (1272 aa).

Disordered regions lie at residues 93-183 (IPKN…LTQD), 201-225 (QIGE…GEDA), and 283-302 (AYVR…PTLK). Residues 97–107 (SVPQNPNNKNE) are compositionally biased toward polar residues. Residues 151–160 (SKPEWSRDSH) are compositionally biased toward basic and acidic residues. A compositionally biased stretch (polar residues) spans 161–183 (NPSTVLASQASGQPNKMQTLTQD). S391 bears the Phosphoserine mark. Disordered stretches follow at residues 418 to 491 (KAKP…KWQL), 535 to 687 (TNAS…DQEE), 779 to 829 (SLHA…PEKK), and 842 to 903 (PPCI…QDKN). Residues 426-438 (VNPPLATPQPPPA) are compositionally biased toward pro residues. A compositionally biased stretch (low complexity) spans 439–452 (VQASGGSGSSSESE). Residue T478 is modified to Phosphothreonine. A compositionally biased stretch (basic and acidic residues) spans 543–558 (EPKERPLLSLIREKAR). A compositionally biased stretch (polar residues) spans 576–586 (STTSETVSQRT). Over residues 616-629 (PKEKESVELHDPPR) the composition is skewed to basic and acidic residues. Basic residues predominate over residues 630-640 (GRNKATAHKPA). The span at 818 to 829 (PTEVAEKIPEKK) shows a compositional bias: basic and acidic residues. Pro residues-rich tracts occupy residues 844–853 (CISPAPPHKP) and 874–883 (FPPPLSPLPE).

Belongs to the AF4 family.

Its subcellular location is the nucleus speckle. Its function is as follows. RNA-binding protein. Might be involved in alternative splicing regulation through an interaction with G-quartet RNA structure. This is AF4/FMR2 family member 2 (AFF2) from Pan troglodytes (Chimpanzee).